Here is a 1057-residue protein sequence, read N- to C-terminus: Diacylglycerol kinase iota (1057 aa).

Low complexity predominate over residues 15–59 (AARGPARAPAAAAAAAASPPGPCSGAACAPSAAAGAGAMNPSSSA). Disordered regions lie at residues 15–74 (AARG…SSGS) and 334–358 (LKAS…MEQE). A compositionally biased stretch (basic residues) spans 337-352 (SNRKKKRTSFKRKASK). Residues 372–507 (PLMKPLLVFV…DRWNLHVERN (136 aa)) form the DAGKc domain. 2 ANK repeats span residues 950-979 (DHCS…SELL) and 986-1015 (TGET…SLRK). A compositionally biased stretch (basic and acidic residues) spans 1014 to 1024 (RKTDSKGKTPQ). A disordered region spans residues 1014–1033 (RKTDSKGKTPQERAQQAGDP). Residues 1055–1057 (TAV) carry the PDZ-binding motif.

This sequence belongs to the eukaryotic diacylglycerol kinase family. As to quaternary structure, interacts (via PDZ-binding motif) with DLG4; controls the localization of DGKI to the synapse. Interacts (via PDZ-binding motif) with DLG1. Interacts (via PDZ-binding motif) with DLG2. Interacts (via PDZ-binding motif) with DLG3. May interact with RASGRP3; involved in the regulation of RASGRP3 activity. In terms of tissue distribution, specifically expressed in brain and retina. In brain, highly expressed in hippocampus, caudate nucleus, occipital pole, cerebral cortex, and cerebellum. Also detected in kidney.

The protein resides in the cell projection. The protein localises to the axon. It localises to the dendrite. It is found in the presynapse. Its subcellular location is the postsynapse. The protein resides in the postsynaptic density. The protein localises to the synaptic cell membrane. It localises to the cytoplasmic vesicle. It is found in the secretory vesicle. Its subcellular location is the synaptic vesicle membrane. The protein resides in the cytoplasm. The protein localises to the cytosol. It localises to the nucleus. It carries out the reaction a 1,2-diacyl-sn-glycerol + ATP = a 1,2-diacyl-sn-glycero-3-phosphate + ADP + H(+). It catalyses the reaction 1,2-di-(9Z-octadecenoyl)-sn-glycerol + ATP = 1,2-di-(9Z-octadecenoyl)-sn-glycero-3-phosphate + ADP + H(+). The catalysed reaction is 1-octadecanoyl-2-(5Z,8Z,11Z,14Z-eicosatetraenoyl)-sn-glycerol + ATP = 1-octadecanoyl-2-(5Z,8Z,11Z,14Z-eicosatetraenoyl)-sn-glycero-3-phosphate + ADP + H(+). The enzyme catalyses 1-octadecanoyl-2-(9Z,12Z)-octadecadienoyl-sn-glycerol + ATP = 1-octadecanoyl-2-(9Z,12Z-octadecadienoyl)-sn-glycero-3-phosphate + ADP + H(+). The protein operates within lipid metabolism; glycerolipid metabolism. Diacylglycerol kinase that converts diacylglycerol/DAG into phosphatidic acid/phosphatidate/PA and regulates the respective levels of these two bioactive lipids. Thereby, acts as a central switch between the signaling pathways activated by these second messengers with different cellular targets and opposite effects in numerous biological processes. Has probably no preference for any of the diacylglycerols in terms of the acyl chain composition, especially for the acyl chain at the sn-2 position. By controlling the diacylglycerol/DAG-mediated activation of RASGRP3, negatively regulates the Rap1 signaling pathway. May play a role in presynaptic diacylglycerol/DAG signaling and control neurotransmitter release during metabotropic glutamate receptor-dependent long-term depression. This Homo sapiens (Human) protein is Diacylglycerol kinase iota.